We begin with the raw amino-acid sequence, 282 residues long: Undecaprenyl-diphosphatase (282 aa).

The next 7 helical transmembrane spans lie at 40–60, 89–109, 113–133, 150–170, 196–216, 230–250, and 258–278; these read GAAF…IYFM, WMIA…KDDI, LRSL…LSIA, ISEI…MALI, FSFL…LYKT, IAVA…FLLT, and GIFI…IGTG.

It belongs to the UppP family.

It is found in the cell inner membrane. The catalysed reaction is di-trans,octa-cis-undecaprenyl diphosphate + H2O = di-trans,octa-cis-undecaprenyl phosphate + phosphate + H(+). Catalyzes the dephosphorylation of undecaprenyl diphosphate (UPP). Confers resistance to bacitracin. This Chlorobaculum parvum (strain DSM 263 / NCIMB 8327) (Chlorobium vibrioforme subsp. thiosulfatophilum) protein is Undecaprenyl-diphosphatase.